The primary structure comprises 469 residues: 3-isopropylmalate dehydratase large subunit (469 aa).

[4Fe-4S] cluster contacts are provided by Cys-347, Cys-407, and Cys-410.

The protein belongs to the aconitase/IPM isomerase family. LeuC type 1 subfamily. As to quaternary structure, heterodimer of LeuC and LeuD. Requires [4Fe-4S] cluster as cofactor.

The catalysed reaction is (2R,3S)-3-isopropylmalate = (2S)-2-isopropylmalate. Its pathway is amino-acid biosynthesis; L-leucine biosynthesis; L-leucine from 3-methyl-2-oxobutanoate: step 2/4. In terms of biological role, catalyzes the isomerization between 2-isopropylmalate and 3-isopropylmalate, via the formation of 2-isopropylmaleate. This Prochlorococcus marinus (strain NATL1A) protein is 3-isopropylmalate dehydratase large subunit.